The primary structure comprises 71 residues: uncharacterized protein (71 aa).

This is an uncharacterized protein from Homo sapiens (Human).